Reading from the N-terminus, the 159-residue chain is Siroheme decarboxylase beta subunit (159 aa).

152–157 is a binding site for substrate; the sequence is KTSMTY.

It belongs to the Ahb/Nir family. Forms a heterodimer composed of AhbA and AhbB.

It catalyses the reaction siroheme + 2 H(+) = 12,18-didecarboxysiroheme + 2 CO2. It participates in porphyrin-containing compound metabolism; protoheme biosynthesis. Its function is as follows. Involved in siroheme-dependent heme b biosynthesis. Catalyzes the decarboxylation of siroheme into didecarboxysiroheme. Siroheme is decarboxylated to monodecarboxysiroheme, which is in turn decarboxylated to didecarboxysiroheme. The protein is Siroheme decarboxylase beta subunit of Desulfovibrio desulfuricans (strain ATCC 27774 / DSM 6949 / MB).